Here is a 261-residue protein sequence, read N- to C-terminus: ATP synthase subunit a (261 aa).

A propeptide spans 1-14 (MSTLSFNNISTEVL) (removed in mature form). The next 7 helical transmembrane spans lie at 38 to 58 (ITNI…INLL), 96 to 116 (IYFP…LIGM), 126 to 146 (HFVV…ILGF), 153 to 173 (FFSL…LVLI), 191 to 211 (ANIL…YNIM), 214 to 234 (GIIF…FSGL), and 235 to 255 (ELGI…GYIK).

The protein belongs to the ATPase A chain family. In terms of assembly, F-type ATPases have 2 components, CF(1) - the catalytic core - and CF(0) - the membrane proton channel. CF(1) has five subunits: alpha(3), beta(3), gamma(1), delta(1), epsilon(1). CF(0) has three main subunits: a, b and c.

It localises to the mitochondrion inner membrane. Its function is as follows. Mitochondrial membrane ATP synthase (F(1)F(0) ATP synthase or Complex V) produces ATP from ADP in the presence of a proton gradient across the membrane which is generated by electron transport complexes of the respiratory chain. F-type ATPases consist of two structural domains, F(1) - containing the extramembraneous catalytic core and F(0) - containing the membrane proton channel, linked together by a central stalk and a peripheral stalk. During catalysis, ATP synthesis in the catalytic domain of F(1) is coupled via a rotary mechanism of the central stalk subunits to proton translocation. Key component of the proton channel; it may play a direct role in the translocation of protons across the membrane. This is ATP synthase subunit a (atp-6) from Neurospora crassa (strain ATCC 24698 / 74-OR23-1A / CBS 708.71 / DSM 1257 / FGSC 987).